Reading from the N-terminus, the 122-residue chain is MIQMQTVLDAADNSGARKVQCIKVLGGSHRRYASVGDIIKVSVKDAIPRGKVKKGEVYNAVVVRTAKGVRRPDGSVVRFDRNAAVLLNNQLQPIGTRIFGPVTRELRGEKFMKIISLAPEVL.

Belongs to the universal ribosomal protein uL14 family. In terms of assembly, part of the 50S ribosomal subunit. Forms a cluster with proteins L3 and L19. In the 70S ribosome, L14 and L19 interact and together make contacts with the 16S rRNA in bridges B5 and B8.

In terms of biological role, binds to 23S rRNA. Forms part of two intersubunit bridges in the 70S ribosome. This is Large ribosomal subunit protein uL14 from Thioalkalivibrio sulfidiphilus (strain HL-EbGR7).